A 63-amino-acid polypeptide reads, in one-letter code: Large ribosomal subunit protein bL28 (63 aa).

Belongs to the bacterial ribosomal protein bL28 family.

This is Large ribosomal subunit protein bL28 from Clostridium botulinum (strain ATCC 19397 / Type A).